The chain runs to 423 residues: Mannose-6-phosphate isomerase (423 aa).

The residue at position 2 (Ala2) is an N-acetylalanine. Residues Ser102 and Ser108 each carry the phosphoserine modification. Zn(2+) is bound by residues Gln110, His112, Glu137, and His276. Arg295 is a catalytic residue.

This sequence belongs to the mannose-6-phosphate isomerase type 1 family. It depends on Zn(2+) as a cofactor.

It is found in the cytoplasm. The catalysed reaction is D-mannose 6-phosphate = D-fructose 6-phosphate. Its pathway is nucleotide-sugar biosynthesis; GDP-alpha-D-mannose biosynthesis; alpha-D-mannose 1-phosphate from D-fructose 6-phosphate: step 1/2. Its function is as follows. Isomerase that catalyzes the interconversion of fructose-6-P and mannose-6-P and has a critical role in the supply of D-mannose derivatives required for many eukaryotic glycosylation reactions. In Pan troglodytes (Chimpanzee), this protein is Mannose-6-phosphate isomerase (MPI).